The chain runs to 92 residues: MSPVLRLEILKLDDKYLELKAKGETYTLFSPLVEYLSNDPDVEYVQFDVDHPLQENAYFKLKVKRGNPLEAIQRAVNAILSDLEELERGFFS.

It belongs to the archaeal Rpo11/eukaryotic RPB11/RPC19 RNA polymerase subunit family. Part of the RNA polymerase complex.

It is found in the cytoplasm. It catalyses the reaction RNA(n) + a ribonucleoside 5'-triphosphate = RNA(n+1) + diphosphate. In terms of biological role, DNA-dependent RNA polymerase (RNAP) catalyzes the transcription of DNA into RNA using the four ribonucleoside triphosphates as substrates. In Pyrobaculum aerophilum (strain ATCC 51768 / DSM 7523 / JCM 9630 / CIP 104966 / NBRC 100827 / IM2), this protein is DNA-directed RNA polymerase subunit Rpo11.